Here is a 249-residue protein sequence, read N- to C-terminus: Isoprenyl transferase (249 aa).

The active site involves Asp-25. Asp-25 is a binding site for Mg(2+). Substrate contacts are provided by residues 26 to 29 (GNGR), Trp-30, Arg-38, His-42, and 70 to 72 (STE). Residue Asn-73 is the Proton acceptor of the active site. Substrate is bound by residues Trp-74, Arg-76, Arg-197, and 203 to 205 (RLS). Mg(2+) is bound at residue Glu-216.

The protein belongs to the UPP synthase family. In terms of assembly, homodimer. Mg(2+) serves as cofactor.

Functionally, catalyzes the condensation of isopentenyl diphosphate (IPP) with allylic pyrophosphates generating different type of terpenoids. In Streptococcus pyogenes serotype M1, this protein is Isoprenyl transferase.